The following is a 156-amino-acid chain: Cyanate hydratase (156 aa).

Active-site residues include Arg96, Glu99, and Ser122.

The protein belongs to the cyanase family. In terms of assembly, homodecamer composed of five homodimers.

It carries out the reaction cyanate + hydrogencarbonate + 3 H(+) = NH4(+) + 2 CO2. In terms of biological role, catalyzes the reaction of cyanate with bicarbonate to produce ammonia and carbon dioxide. The polypeptide is Cyanate hydratase (cynS) (Escherichia coli O157:H7).